The primary structure comprises 274 residues: Ommochrome-binding protein (274 aa).

An N-terminal signal peptide occupies residues 1–18 (MKLLILTICALHVNQMMA). An N-linked (GlcNAc...) asparagine glycan is attached at N183.

Monomer. In terms of tissue distribution, present in larval hemolymph and synthesized by the fat body.

Its function is as follows. Binds to an ommochrome, ommatin D which is a yellow chromophore. May be involved in guiding the chromophore through the hemolymph from the epidermis to the gut. In Manduca sexta (Tobacco hawkmoth), this protein is Ommochrome-binding protein.